We begin with the raw amino-acid sequence, 250 residues long: Octanoyltransferase (250 aa).

A BPL/LPL catalytic domain is found at 49-230 (DEINDVILVL…ALDDAFAGRL (182 aa)). Residues 87-94 (RGGRITWH), 160-162 (ALG), and 173-175 (GLA) contribute to the substrate site. Cysteine 191 serves as the catalytic Acyl-thioester intermediate.

The protein belongs to the LipB family.

It localises to the cytoplasm. It carries out the reaction octanoyl-[ACP] + L-lysyl-[protein] = N(6)-octanoyl-L-lysyl-[protein] + holo-[ACP] + H(+). The protein operates within protein modification; protein lipoylation via endogenous pathway; protein N(6)-(lipoyl)lysine from octanoyl-[acyl-carrier-protein]: step 1/2. Functionally, catalyzes the transfer of endogenously produced octanoic acid from octanoyl-acyl-carrier-protein onto the lipoyl domains of lipoate-dependent enzymes. Lipoyl-ACP can also act as a substrate although octanoyl-ACP is likely to be the physiological substrate. The chain is Octanoyltransferase from Corynebacterium diphtheriae (strain ATCC 700971 / NCTC 13129 / Biotype gravis).